A 304-amino-acid polypeptide reads, in one-letter code: Probable UDP-3-O-acylglucosamine N-acyltransferase 2, mitochondrial (304 aa).

Residues 1 to 47 (MAATLWRLYSKSICNSLQGIILNKPFIQKQLLLSSRTRSLSFSSDSQ) constitute a mitochondrion transit peptide. Residue 159 to 161 (FGF) coordinates UDP-N-acetyl-alpha-D-glucosamine. 2 residues coordinate hexadecanoate: Asp-209 and Gln-213. The Proton acceptor role is filled by His-216. 3 residues coordinate UDP-N-acetyl-alpha-D-glucosamine: Asn-217, Ser-235, and His-253.

The protein belongs to the transferase hexapeptide repeat family. LpxD subfamily. As to quaternary structure, homotrimer.

The protein resides in the mitochondrion. The enzyme catalyses a UDP-3-O-[(3R)-3-hydroxyacyl]-alpha-D-glucosamine + a (3R)-hydroxyacyl-[ACP] = a UDP-2-N,3-O-bis[(3R)-3-hydroxyacyl]-alpha-D-glucosamine + holo-[ACP] + H(+). It participates in glycolipid biosynthesis; lipid IV(A) biosynthesis; lipid IV(A) from (3R)-3-hydroxytetradecanoyl-[acyl-carrier-protein] and UDP-N-acetyl-alpha-D-glucosamine: step 3/6. Involved in the biosynthesis of lipid A, a phosphorylated glycolipid that in bacteria anchors the lipopolysaccharide to the outer membrane of the cell. Lipid A-like molecules in plants may serve as structural components of the outer membranes of mitochondria and/or chloroplasts, or may be involved in signal transduction or plant defense responses. This chain is Probable UDP-3-O-acylglucosamine N-acyltransferase 2, mitochondrial (LPXD2), found in Arabidopsis thaliana (Mouse-ear cress).